Here is a 216-residue protein sequence, read N- to C-terminus: Small ribosomal subunit protein uS5 (216 aa).

The tract at residues Met1–Pro55 is disordered. Polar residues predominate over residues Leu20 to Asn31. Positions Phe57–Val120 constitute an S5 DRBM domain.

This sequence belongs to the universal ribosomal protein uS5 family. As to quaternary structure, part of the 30S ribosomal subunit. Contacts proteins S4 and S8.

Its function is as follows. With S4 and S12 plays an important role in translational accuracy. Located at the back of the 30S subunit body where it stabilizes the conformation of the head with respect to the body. This Mesomycoplasma hyopneumoniae (strain 7448) (Mycoplasma hyopneumoniae) protein is Small ribosomal subunit protein uS5.